The sequence spans 806 residues: Leucine--tRNA ligase (806 aa).

Positions 40–51 (PYPSGSGLHVGH) match the 'HIGH' region motif. The short motif at 576–580 (KMSKS) is the 'KMSKS' region element. Lysine 579 serves as a coordination point for ATP.

This sequence belongs to the class-I aminoacyl-tRNA synthetase family.

It is found in the cytoplasm. It catalyses the reaction tRNA(Leu) + L-leucine + ATP = L-leucyl-tRNA(Leu) + AMP + diphosphate. The chain is Leucine--tRNA ligase from Chlorobium phaeobacteroides (strain BS1).